A 298-amino-acid chain; its full sequence is Phosphatidylglycerol--prolipoprotein diacylglyceryl transferase (298 aa).

7 helical membrane-spanning segments follow: residues Leu-17–Gly-37, Met-59–Tyr-79, Gly-97–Trp-117, Phe-129–Gly-149, Ser-204–Ala-224, Met-230–Phe-250, and Phe-257–Leu-277. An a 1,2-diacyl-sn-glycero-3-phospho-(1'-sn-glycerol)-binding site is contributed by Arg-142.

It belongs to the Lgt family.

It localises to the cell inner membrane. It catalyses the reaction L-cysteinyl-[prolipoprotein] + a 1,2-diacyl-sn-glycero-3-phospho-(1'-sn-glycerol) = an S-1,2-diacyl-sn-glyceryl-L-cysteinyl-[prolipoprotein] + sn-glycerol 1-phosphate + H(+). It functions in the pathway protein modification; lipoprotein biosynthesis (diacylglyceryl transfer). Functionally, catalyzes the transfer of the diacylglyceryl group from phosphatidylglycerol to the sulfhydryl group of the N-terminal cysteine of a prolipoprotein, the first step in the formation of mature lipoproteins. The protein is Phosphatidylglycerol--prolipoprotein diacylglyceryl transferase of Burkholderia orbicola (strain MC0-3).